The sequence spans 502 residues: 9-beta-pimara-7,15-diene oxidase (502 aa).

The next 2 helical transmembrane spans lie at 4–26 (INSE…ALLT) and 106–128 (LLVS…GAYW). Position 438 (cysteine 438) interacts with heme.

Belongs to the cytochrome P450 family. Heme serves as cofactor.

The protein localises to the membrane. It carries out the reaction 9beta-pimara-7,15-diene + 3 reduced [NADPH--hemoprotein reductase] + 3 O2 = 9beta-pimara-7,15-dien-19-oate + 3 oxidized [NADPH--hemoprotein reductase] + 4 H2O + 4 H(+). Involved in momilactone phytoalexins biosynthesis; acts as a multifunctional diterpene oxidase. Participates in the biosynthetic steps between 9-beta-pimara-7,15-diene and 3-beta-hydroxy-9-beta-pimara-7,15-dien-19,6-beta-olide. Also catalyzes consecutive oxidations at C19 of syn-stemod-13(17)-ene. In Oryza sativa subsp. japonica (Rice), this protein is 9-beta-pimara-7,15-diene oxidase (CYP99A3).